Consider the following 341-residue polypeptide: Peroxisomal membrane protein PEX14 (341 aa).

Position 2 is an N-acetylserine (Ser2). The short motif at 86–94 (PPTLPHRDW) is the SH3-binding element. The segment at 276–341 (MQEESDKEKE…QNGQVEDSIP (66 aa)) is disordered. Residues 279-295 (ESDKEKENGSDANKDDN) show a composition bias toward basic and acidic residues. A compositionally biased stretch (polar residues) spans 308 to 341 (IDSNASIPEWQKNTAANEISVPDWQNGQVEDSIP). Phosphoserine is present on Ser313.

The protein belongs to the peroxin-14 family. Interacts with PEX13 (via SH3 domain); forming the PEX13-PEX14 docking complex. Interacts with PEX5 (via WxxxF/Y motifs). Interacts with PEX7. Interacts with PEX9.

The protein localises to the peroxisome membrane. Functionally, component of the PEX13-PEX14 docking complex, a translocon channel that specifically mediates the import of peroxisomal cargo proteins bound to PEX5 or PEX21 receptors. The PEX13-PEX14 docking complex forms a large import pore which can be opened to a diameter of about 9 nm. Mechanistically, PEX5 (or PEX21) receptor along with cargo proteins associates with the PEX14 subunit of the PEX13-PEX14 docking complex in the cytosol, leading to the insertion of the receptor into the organelle membrane with the concomitant translocation of the cargo into the peroxisome matrix. The chain is Peroxisomal membrane protein PEX14 from Saccharomyces cerevisiae (strain ATCC 204508 / S288c) (Baker's yeast).